We begin with the raw amino-acid sequence, 106 residues long: Nucleoid-associated protein XOO1065 (106 aa).

Residues 80–89 are compositionally biased toward basic and acidic residues; it reads KIDAESKDRM. Residues 80–106 form a disordered region; sequence KIDAESKDRMGSATAGMQLPPGMKLPF.

This sequence belongs to the YbaB/EbfC family. In terms of assembly, homodimer.

The protein resides in the cytoplasm. It localises to the nucleoid. In terms of biological role, binds to DNA and alters its conformation. May be involved in regulation of gene expression, nucleoid organization and DNA protection. This is Nucleoid-associated protein XOO1065 from Xanthomonas oryzae pv. oryzae (strain KACC10331 / KXO85).